The following is an 86-amino-acid chain: Small ribosomal subunit protein bS18 (86 aa).

The interval 1 to 20 (MSREEGNNGRRPGGKMRRSR) is disordered.

It belongs to the bacterial ribosomal protein bS18 family. As to quaternary structure, part of the 30S ribosomal subunit. Forms a tight heterodimer with protein bS6.

In terms of biological role, binds as a heterodimer with protein bS6 to the central domain of the 16S rRNA, where it helps stabilize the platform of the 30S subunit. The protein is Small ribosomal subunit protein bS18 of Clostridium beijerinckii (strain ATCC 51743 / NCIMB 8052) (Clostridium acetobutylicum).